A 648-amino-acid polypeptide reads, in one-letter code: A-type voltage-gated potassium channel KCND1 (648 aa).

The Cytoplasmic portion of the chain corresponds to 1–183; it reads MAAGVATWLP…RAFENPHTST (183 aa). The interval 2–20 is interaction with KCNIP1, KCNIP2, and other family members; that stretch reads AAGVATWLPFARAAAVGWL. The interaction with KCNIP2 stretch occupies residues 2 to 20; that stretch reads AAGVATWLPFARAAAVGWL. 3 residues coordinate Zn(2+): histidine 104, cysteine 131, and cysteine 132. Residues 144-164 are disordered; that stretch reads AERLAEDEEAEQAGDGPTLPA. A helical transmembrane segment spans residues 184-205; sequence AALVFYYVTGFFIAVSVIANVV. Over 206–230 the chain is Extracellular; the sequence is ETIPCRSPTRRPPREQPCGDRFPLA. A helical transmembrane segment spans residues 231–252; it reads FFCMDTACVLIFTGEYLLRLFA. The Cytoplasmic portion of the chain corresponds to 253-263; sequence APSRCRFLRSV. A helical membrane pass occupies residues 264 to 284; it reads MSLIDVVAILPYYIGLFMPKN. Residues 285–287 are Extracellular-facing; the sequence is EDV. Residues 288 to 308 traverse the membrane as a helical; Voltage-sensor segment; it reads SGAFVTLRVFRVFRIFKFSRH. At 309–323 the chain is on the cytoplasmic side; sequence SQGLRILGYTLKSCA. An S4-S5 linker region spans residues 310–323; the sequence is QGLRILGYTLKSCA. A helical transmembrane segment spans residues 324–345; sequence SELGFLLFSLTMAIIIFATVMF. The Extracellular segment spans residues 346–359; the sequence is YAEKGTNKTNFTSI. N-linked (GlcNAc...) asparagine glycosylation is found at asparagine 352 and asparagine 355. The segment at residues 360 to 371 is an intramembrane region (helical); it reads PAAFWYTIVTMT. The Selectivity filter signature appears at 372 to 377; that stretch reads TLGYGD. An intramembrane segment occupies 372-379; it reads TLGYGDMV. The Extracellular segment spans residues 380–386; sequence PSTIAGK. A helical membrane pass occupies residues 387–415; it reads IFGSICSLSGVLVIALPVPVIVSNFSRIY. The Cytoplasmic segment spans residues 416 to 648; sequence HQNQRADKRR…LPETVKISSL (233 aa). Serine 458 is subject to Phosphoserine. Residues 474-489 form a mediates dendritic targeting region; it reads FEQQHHHLLHCLEKTT. Positions 474 to 489 are required for dendritic targeting; sequence FEQQHHHLLHCLEKTT. Serine 555 bears the Phosphoserine mark. Positions 601–636 are disordered; sequence IPTPPANTPDESQPSSPGGGGGGASSTLRNSSLGTP.

It belongs to the potassium channel family. D (Shal) (TC 1.A.1.2) subfamily. Kv4.1/KCND1 sub-subfamily. In terms of assembly, component of heteromultimeric potassium channels. Identified in potassium channel complexes containing KCND1, KCND2, KCND3, KCNIP1, KCNIP2, KCNIP3, KCNIP4, DPP6 and DPP10.

Its subcellular location is the cell membrane. The enzyme catalyses K(+)(in) = K(+)(out). In terms of biological role, A-type voltage-gated potassium channel that mediates transmembrane potassium transport in excitable membranes in the brain. Mediates A-type current I(SA) in suprachiasmatic nucleus (SCN) neurons. Exhibits a low-threshold A-type current with a hyperpolarized steady-state inactivation midpoint and the recovery process was steeply voltage-dependent, with recovery being markedly faster at more negative potentials. May regulates repetitive firing rates in the suprachiasmatic nucleus (SCN) neurons and circadian rhythms in neuronal excitability and behavior. Contributes to the regulation of the circadian rhythm of action potential firing in suprachiasmatic nucleus neurons, which regulates the circadian rhythm of locomotor activity. The regulatory subunit KCNIP1 modulates the kinetics of channel inactivation, increases the current amplitudes and accelerates recovery from inactivation, shifts activation in a depolarizing direction. The regulatory subunit DPP10 decreases the voltage sensitivity of the inactivation channel gating. The sequence is that of A-type voltage-gated potassium channel KCND1 from Bos taurus (Bovine).